We begin with the raw amino-acid sequence, 342 residues long: Ribosomal RNA small subunit methyltransferase C (342 aa).

It belongs to the methyltransferase superfamily. RsmC family. In terms of assembly, monomer.

The protein resides in the cytoplasm. The enzyme catalyses guanosine(1207) in 16S rRNA + S-adenosyl-L-methionine = N(2)-methylguanosine(1207) in 16S rRNA + S-adenosyl-L-homocysteine + H(+). Functionally, specifically methylates the guanine in position 1207 of 16S rRNA in the 30S particle. The chain is Ribosomal RNA small subunit methyltransferase C from Erwinia tasmaniensis (strain DSM 17950 / CFBP 7177 / CIP 109463 / NCPPB 4357 / Et1/99).